The sequence spans 266 residues: Ribosomal RNA small subunit methyltransferase A (266 aa).

6 residues coordinate S-adenosyl-L-methionine: His13, Leu15, Gly40, Glu61, Asp85, and Asn104.

The protein belongs to the class I-like SAM-binding methyltransferase superfamily. rRNA adenine N(6)-methyltransferase family. RsmA subfamily.

It localises to the cytoplasm. The catalysed reaction is adenosine(1518)/adenosine(1519) in 16S rRNA + 4 S-adenosyl-L-methionine = N(6)-dimethyladenosine(1518)/N(6)-dimethyladenosine(1519) in 16S rRNA + 4 S-adenosyl-L-homocysteine + 4 H(+). Functionally, specifically dimethylates two adjacent adenosines (A1518 and A1519) in the loop of a conserved hairpin near the 3'-end of 16S rRNA in the 30S particle. May play a critical role in biogenesis of 30S subunits. This chain is Ribosomal RNA small subunit methyltransferase A, found in Parabacteroides distasonis (strain ATCC 8503 / DSM 20701 / CIP 104284 / JCM 5825 / NCTC 11152).